Here is a 393-residue protein sequence, read N- to C-terminus: CCA-adding enzyme (393 aa).

The ATP site is built by Gly27 and Arg30. Residues Gly27 and Arg30 each coordinate CTP. 2 residues coordinate Mg(2+): Asp40 and Asp42. The ATP site is built by Arg111, Asp154, Arg157, Arg160, and Arg163. CTP contacts are provided by Arg111, Asp154, Arg157, Arg160, and Arg163.

It belongs to the tRNA nucleotidyltransferase/poly(A) polymerase family. Bacterial CCA-adding enzyme type 3 subfamily. Homodimer. Mg(2+) serves as cofactor.

The catalysed reaction is a tRNA precursor + 2 CTP + ATP = a tRNA with a 3' CCA end + 3 diphosphate. It carries out the reaction a tRNA with a 3' CCA end + 2 CTP + ATP = a tRNA with a 3' CCACCA end + 3 diphosphate. Its function is as follows. Catalyzes the addition and repair of the essential 3'-terminal CCA sequence in tRNAs without using a nucleic acid template. Adds these three nucleotides in the order of C, C, and A to the tRNA nucleotide-73, using CTP and ATP as substrates and producing inorganic pyrophosphate. tRNA 3'-terminal CCA addition is required both for tRNA processing and repair. Also involved in tRNA surveillance by mediating tandem CCA addition to generate a CCACCA at the 3' terminus of unstable tRNAs. While stable tRNAs receive only 3'-terminal CCA, unstable tRNAs are marked with CCACCA and rapidly degraded. This chain is CCA-adding enzyme, found in Listeria monocytogenes serotype 4b (strain CLIP80459).